The sequence spans 351 residues: sn-glycerol-3-phosphate import ATP-binding protein UgpC (351 aa).

An ABC transporter domain is found at 4 to 235; the sequence is IVLDNVRKSY…PASTFVATFI (232 aa). 37–44 lines the ATP pocket; that stretch reads GPSGCGKS.

It belongs to the ABC transporter superfamily. sn-glycerol-3-phosphate importer (TC 3.A.1.1.3) family. The complex is composed of two ATP-binding proteins (UgpC), two transmembrane proteins (UgpA and UgpE) and a solute-binding protein (UgpB).

It is found in the cell inner membrane. The enzyme catalyses sn-glycerol 3-phosphate(out) + ATP + H2O = sn-glycerol 3-phosphate(in) + ADP + phosphate + H(+). Its function is as follows. Part of the ABC transporter complex UgpBAEC involved in sn-glycerol-3-phosphate (G3P) import. Responsible for energy coupling to the transport system. This Brucella abortus (strain 2308) protein is sn-glycerol-3-phosphate import ATP-binding protein UgpC.